We begin with the raw amino-acid sequence, 121 residues long: MTDRVDINRVLMEIRSFKAQNQAMNSVQGVGNSLEGVNNTRGTQQVNGPRFGELLEQAVSKVNEVQQASGAMSQAYIQGDSNVGITDVMIASQKAGVAFDAMVQVRNKLVEAYKDVMNMPI.

The protein belongs to the FliE family.

It localises to the bacterial flagellum basal body. The protein is Flagellar hook-basal body complex protein FliE of Saccharophagus degradans (strain 2-40 / ATCC 43961 / DSM 17024).